Reading from the N-terminus, the 248-residue chain is Exosome complex component Rrp41 (248 aa).

This sequence belongs to the RNase PH family. Rrp41 subfamily. Component of the archaeal exosome complex. Forms a hexameric ring-like arrangement composed of 3 Rrp41-Rrp42 heterodimers. The hexameric ring associates with a trimer of Rrp4 and/or Csl4 subunits.

The protein resides in the cytoplasm. Its function is as follows. Catalytic component of the exosome, which is a complex involved in RNA degradation. Has 3'-&gt;5' exoribonuclease activity. Can also synthesize heteromeric RNA-tails. This chain is Exosome complex component Rrp41, found in Thermoplasma volcanium (strain ATCC 51530 / DSM 4299 / JCM 9571 / NBRC 15438 / GSS1).